Consider the following 58-residue polypeptide: Large ribosomal subunit protein uL30 (58 aa).

Belongs to the universal ribosomal protein uL30 family. Part of the 50S ribosomal subunit.

In Pseudomonas savastanoi pv. phaseolicola (strain 1448A / Race 6) (Pseudomonas syringae pv. phaseolicola (strain 1448A / Race 6)), this protein is Large ribosomal subunit protein uL30.